Here is a 1275-residue protein sequence, read N- to C-terminus: Inner capsid protein lambda-1 (1275 aa).

Over residues 1–12 (MKRIPRKTKGKS) the composition is skewed to basic residues. Positions 1 to 149 (MKRIPRKTKG…DNEGGSNQKP (149 aa)) are disordered. Basic and acidic residues-rich tracts occupy residues 18–35 (DSTE…DKQN) and 75–117 (NNDE…DKSK). The span at 118–149 (AQVTYSDTGINNANELSRSGNVDNEGGSNQKP) shows a compositional bias: polar residues. The segment at 181-203 (YQCHVCSAVLFSPLDLDAHVASH) adopts a C2H2-type zinc-finger fold.

It belongs to the orthoreovirus lambda-1 protein family. In terms of assembly, homodecamer; each decamer is made up of two conformers of VP2, called VP2A and VP2B. 12 homodecamers assemble to form an icosahedral capsid. Interacts with protein mu-NS; in viral inclusions. Mg(2+) is required as a cofactor. It depends on Mn(2+) as a cofactor.

It localises to the virion. It catalyses the reaction ATP + H2O = ADP + phosphate + H(+). Its function is as follows. Inner capsid protein that self-assembles to form an icosahedral capsid with a T=2 symmetry, which consists of 120 copies of VP2, with channels at each of its five-fold vertices. This capsid constitutes the innermost concentric layer of the viral mature particle. Functionally, displays NTPase, RNA 5'-triphosphatase (RTPase) and RNA helicase activities. Helicase activity might be involved in unwinding or reannealing dsRNA during RNA synthesis. RTPase enzymatic activity represents the first step in RNA capping, which yields a 5'-diphosphorylated plus-strand RNA. The protein is Inner capsid protein lambda-1 (L3) of Reovirus type 3 (strain Dearing) (T3D).